A 75-amino-acid polypeptide reads, in one-letter code: DNA-directed RNA polymerase subunit Rpo6 (75 aa).

Belongs to the archaeal Rpo6/eukaryotic RPB6 RNA polymerase subunit family. In terms of assembly, part of the RNA polymerase complex.

The protein localises to the cytoplasm. The enzyme catalyses RNA(n) + a ribonucleoside 5'-triphosphate = RNA(n+1) + diphosphate. Its function is as follows. DNA-dependent RNA polymerase (RNAP) catalyzes the transcription of DNA into RNA using the four ribonucleoside triphosphates as substrates. In Archaeoglobus fulgidus (strain ATCC 49558 / DSM 4304 / JCM 9628 / NBRC 100126 / VC-16), this protein is DNA-directed RNA polymerase subunit Rpo6.